The chain runs to 153 residues: UPF0756 membrane protein lin1603 (153 aa).

Helical transmembrane passes span 6-26 (MLFL…SLII), 54-74 (WGVT…QIGF), 80-100 (SFKS…SILA), and 117-137 (LVFG…GPVI).

This sequence belongs to the UPF0756 family.

The protein localises to the cell membrane. In Listeria innocua serovar 6a (strain ATCC BAA-680 / CLIP 11262), this protein is UPF0756 membrane protein lin1603.